The sequence spans 605 residues: Beta-hexosaminidase ARB_07893 (605 aa).

The signal sequence occupies residues 1–18 (MLWIWVPGILGLFGRVEA). A glycan (N-linked (GlcNAc...) asparagine) is linked at Asn-30. The active-site Nucleophile is Glu-293. Asn-342 is a glycosylation site (N-linked (GlcNAc...) asparagine). Glu-374 acts as the Proton donor in catalysis. Asn-449 is a glycosylation site (N-linked (GlcNAc...) asparagine).

It belongs to the glycosyl hydrolase 20 family.

It is found in the secreted. It catalyses the reaction Hydrolysis of terminal non-reducing N-acetyl-D-hexosamine residues in N-acetyl-beta-D-hexosaminides.. In terms of biological role, beta-hexosaminidase that shows a broad substrate specificity. This Arthroderma benhamiae (strain ATCC MYA-4681 / CBS 112371) (Trichophyton mentagrophytes) protein is Beta-hexosaminidase ARB_07893.